A 122-amino-acid polypeptide reads, in one-letter code: NADH-quinone oxidoreductase subunit A (122 aa).

A run of 3 helical transmembrane segments spans residues 12–32 (ILLF…AGWL), 67–87 (IAIL…WAVV), and 91–111 (IGWF…VGFI).

This sequence belongs to the complex I subunit 3 family. NDH-1 is composed of 14 different subunits. Subunits NuoA, H, J, K, L, M, N constitute the membrane sector of the complex.

Its subcellular location is the cell inner membrane. It carries out the reaction a quinone + NADH + 5 H(+)(in) = a quinol + NAD(+) + 4 H(+)(out). Functionally, NDH-1 shuttles electrons from NADH, via FMN and iron-sulfur (Fe-S) centers, to quinones in the respiratory chain. The immediate electron acceptor for the enzyme in this species is believed to be ubiquinone. Couples the redox reaction to proton translocation (for every two electrons transferred, four hydrogen ions are translocated across the cytoplasmic membrane), and thus conserves the redox energy in a proton gradient. This chain is NADH-quinone oxidoreductase subunit A, found in Nitrosomonas europaea (strain ATCC 19718 / CIP 103999 / KCTC 2705 / NBRC 14298).